The following is a 129-amino-acid chain: M-zodatoxin-Lt8b (129 aa).

An N-terminal signal peptide occupies residues 1–20; sequence MKYFVVALALVAAFACIAES. The propeptide occupies 21–60; sequence KPAESEHELAEVEEENELADLEDAVWLEHLADLSDLEEAR. The Processing quadruplet motif signature appears at 57 to 60; sequence EEAR.

Cleavage of the propeptide depends on the processing quadruplet motif (XXXR, with at least one of X being E). Expressed by the venom gland.

The protein localises to the secreted. In terms of biological role, insecticidal, cytolytic and antimicrobial peptide. Forms voltage-dependent, ion-permeable channels in membranes. At high concentration causes cell membrane lysis. The sequence is that of M-zodatoxin-Lt8b (cit 1-2) from Lachesana tarabaevi (Spider).